The sequence spans 2763 residues: Large tegument protein deneddylase (2763 aa).

Residues 1 to 247 are deubiquitination activity; that stretch reads MDIIPPIAVT…CDTYFTDEQY (247 aa). A Peptidase C76 domain is found at 12–237; sequence AGVGSRNQFD…SSAVTLIYGS (226 aa). Catalysis depends on residues cysteine 32, aspartate 168, and histidine 170. The interval 495–523 is interaction with inner tegument protein; sequence LELFINLTILRLTGFVVENGTRTHHGATS. 8 tandem repeats follow at residues 2455-2457, 2458-2460, 2461-2463, 2464-2466, 2467-2469, 2470-2472, 2473-2475, and 2476-2478. An 8 X 3 AA repeats of P-A/V-Q region spans residues 2455-2478; the sequence is PVQPVQPAQPVQPAQPAQPVQPAQ. A disordered region spans residues 2630–2651; that stretch reads NYKTRQPSPNFPRDVHTWGVSS.

Belongs to the herpesviridae large tegument protein family. As to quaternary structure, interacts with host CUL1 and CUL4A; these interactions inhibit the E3 ligase activity of cullins. Interacts with inner tegument protein. Interacts with capsid vertex specific component CVC2. Interacts with the major capsid protein/MCP.

The protein resides in the virion tegument. Its subcellular location is the host cytoplasm. It localises to the host nucleus. The catalysed reaction is Thiol-dependent hydrolysis of ester, thioester, amide, peptide and isopeptide bonds formed by the C-terminal Gly of ubiquitin (a 76-residue protein attached to proteins as an intracellular targeting signal).. In terms of biological role, large tegument protein that plays multiple roles in the viral cycle. During viral entry, remains associated with the capsid while most of the tegument is detached and participates in the capsid transport toward the host nucleus. Plays a role in the routing of the capsid at the nuclear pore complex and subsequent uncoating. Within the host nucleus, acts as a deneddylase and promotes the degradation of nuclear CRLs (cullin-RING ubiquitin ligases) and thereby stabilizes nuclear CRL substrates, while cytoplasmic CRLs remain unaffected. These modifications prevent host cell cycle S-phase progression and create a favorable environment allowing efficient viral genome replication. Participates later in the secondary envelopment of capsids. Indeed, plays a linker role for the association of the outer viral tegument to the capsids together with the inner tegument protein. The polypeptide is Large tegument protein deneddylase (Varicella-zoster virus (strain Oka vaccine) (HHV-3)).